The following is a 285-amino-acid chain: Hsp90 co-chaperone Cdc37-like 1 (285 aa).

The interval 34 to 54 (LHNSESMDQEQAMAQAELSEL) is disordered. Residues 35–73 (HNSESMDQEQAMAQAELSELQRSEEEWRRKEAALSQGEN) are a coiled coil.

The protein belongs to the CDC37 family. Forms complexes with Hsp70 and Hsp90.

The protein resides in the cytoplasm. Its function is as follows. Co-chaperone that binds to numerous proteins and promotes their interaction with Hsp70 and Hsp90. This is Hsp90 co-chaperone Cdc37-like 1 (cdc37l1) from Xenopus tropicalis (Western clawed frog).